The sequence spans 367 residues: Flagellar P-ring protein (367 aa).

A signal peptide spans M1–A22.

This sequence belongs to the FlgI family. In terms of assembly, the basal body constitutes a major portion of the flagellar organelle and consists of four rings (L,P,S, and M) mounted on a central rod.

It localises to the periplasm. It is found in the bacterial flagellum basal body. Assembles around the rod to form the L-ring and probably protects the motor/basal body from shearing forces during rotation. The chain is Flagellar P-ring protein from Legionella pneumophila subsp. pneumophila (strain Philadelphia 1 / ATCC 33152 / DSM 7513).